Consider the following 283-residue polypeptide: Elongation factor Ts (283 aa).

The involved in Mg(2+) ion dislocation from EF-Tu stretch occupies residues 80 to 83 (TDFV).

It belongs to the EF-Ts family.

The protein localises to the cytoplasm. Its function is as follows. Associates with the EF-Tu.GDP complex and induces the exchange of GDP to GTP. It remains bound to the aminoacyl-tRNA.EF-Tu.GTP complex up to the GTP hydrolysis stage on the ribosome. This Salmonella choleraesuis (strain SC-B67) protein is Elongation factor Ts.